The chain runs to 141 residues: Large-conductance mechanosensitive channel (141 aa).

The next 3 helical transmembrane spans lie at 14–34 (VVDL…VNSL), 38–58 (VIMP…YYIP), and 82–102 (GQFL…FMVI).

It belongs to the MscL family. Homopentamer.

The protein resides in the cell inner membrane. In terms of biological role, channel that opens in response to stretch forces in the membrane lipid bilayer. May participate in the regulation of osmotic pressure changes within the cell. The polypeptide is Large-conductance mechanosensitive channel (Methylorubrum extorquens (strain CM4 / NCIMB 13688) (Methylobacterium extorquens)).